A 274-amino-acid polypeptide reads, in one-letter code: Diaminopimelate epimerase (274 aa).

Positions 11, 44, and 64 each coordinate substrate. The active-site Proton donor is the Cys-73. Substrate-binding positions include 74–75, Asn-157, Asn-190, and 208–209; these read GN and ER. Residue Cys-217 is the Proton acceptor of the active site. 218–219 is a substrate binding site; the sequence is GS.

The protein belongs to the diaminopimelate epimerase family. As to quaternary structure, homodimer.

The protein localises to the cytoplasm. It carries out the reaction (2S,6S)-2,6-diaminopimelate = meso-2,6-diaminopimelate. It participates in amino-acid biosynthesis; L-lysine biosynthesis via DAP pathway; DL-2,6-diaminopimelate from LL-2,6-diaminopimelate: step 1/1. Its function is as follows. Catalyzes the stereoinversion of LL-2,6-diaminopimelate (L,L-DAP) to meso-diaminopimelate (meso-DAP), a precursor of L-lysine and an essential component of the bacterial peptidoglycan. The chain is Diaminopimelate epimerase from Glaesserella parasuis serovar 5 (strain SH0165) (Haemophilus parasuis).